A 630-amino-acid chain; its full sequence is Threonine--tRNA ligase (630 aa).

The segment at 1–137 (MKVLLIHSDY…PLSELSRKIT (137 aa)) is editing domain. Residues 207-506 (PHVKFITEKE…ADAGAPPMLP (300 aa)) form a catalytic region. Zn(2+)-binding residues include cysteine 299, histidine 351, and histidine 475.

It belongs to the class-II aminoacyl-tRNA synthetase family. As to quaternary structure, homodimer. It depends on Zn(2+) as a cofactor.

It localises to the cytoplasm. It carries out the reaction tRNA(Thr) + L-threonine + ATP = L-threonyl-tRNA(Thr) + AMP + diphosphate + H(+). Catalyzes the attachment of threonine to tRNA(Thr) in a two-step reaction: L-threonine is first activated by ATP to form Thr-AMP and then transferred to the acceptor end of tRNA(Thr). Also edits incorrectly charged L-seryl-tRNA(Thr). The sequence is that of Threonine--tRNA ligase from Methanococcus aeolicus (strain ATCC BAA-1280 / DSM 17508 / OCM 812 / Nankai-3).